Consider the following 626-residue polypeptide: Chaperone protein HtpG (626 aa).

Residues M1–R341 form an a; substrate-binding region. The interval E342–K552 is b. Residues V553–K626 are c.

Belongs to the heat shock protein 90 family. Homodimer.

The protein resides in the cytoplasm. In terms of biological role, molecular chaperone. Has ATPase activity. The sequence is that of Chaperone protein HtpG from Clostridium botulinum (strain 657 / Type Ba4).